The chain runs to 186 residues: Large ribosomal subunit protein eL18B (186 aa).

K50 is subject to N6,N6,N6-trimethyllysine. K116 is covalently cross-linked (Glycyl lysine isopeptide (Lys-Gly) (interchain with G-Cter in ubiquitin)).

Belongs to the eukaryotic ribosomal protein eL18 family. As to quaternary structure, component of the large ribosomal subunit (LSU). Mature yeast ribosomes consist of a small (40S) and a large (60S) subunit. The 40S small subunit contains 1 molecule of ribosomal RNA (18S rRNA) and 33 different proteins (encoded by 57 genes). The large 60S subunit contains 3 rRNA molecules (25S, 5.8S and 5S rRNA) and 46 different proteins (encoded by 81 genes). eL18 interacts with NAP1.

The protein resides in the cytoplasm. In terms of biological role, component of the ribosome, a large ribonucleoprotein complex responsible for the synthesis of proteins in the cell. The small ribosomal subunit (SSU) binds messenger RNAs (mRNAs) and translates the encoded message by selecting cognate aminoacyl-transfer RNA (tRNA) molecules. The large subunit (LSU) contains the ribosomal catalytic site termed the peptidyl transferase center (PTC), which catalyzes the formation of peptide bonds, thereby polymerizing the amino acids delivered by tRNAs into a polypeptide chain. The nascent polypeptides leave the ribosome through a tunnel in the LSU and interact with protein factors that function in enzymatic processing, targeting, and the membrane insertion of nascent chains at the exit of the ribosomal tunnel. The sequence is that of Large ribosomal subunit protein eL18B from Saccharomyces cerevisiae (strain ATCC 204508 / S288c) (Baker's yeast).